The sequence spans 38 residues: Potassium channel toxin alpha-KTx 2.3 (38 aa).

3 cysteine pairs are disulfide-bonded: Cys7/Cys29, Cys13/Cys34, and Cys17/Cys36.

This sequence belongs to the short scorpion toxin superfamily. Potassium channel inhibitor family. Alpha-KTx 02 subfamily. Expressed by the venom gland.

Its subcellular location is the secreted. Functionally, inhibitor of voltage-gated potassium channels (Kv). It is capable of displacing the binding of radio-labeled noxiustoxin (AC P08815) to rat brain synaptosomes with high affinity (about 100 pM). It is also capable of inhibiting transient potassium-currents (resembling I(A)-type currents), in cultured rat cerebellar granule cells. About 50% of the peak currents are reduced by application of a 1.5 uM solution of this toxin. This is Potassium channel toxin alpha-KTx 2.3 from Centruroides limpidus (Mexican scorpion).